The sequence spans 332 residues: Anthranilate phosphoribosyltransferase (332 aa).

5-phospho-alpha-D-ribose 1-diphosphate is bound by residues glycine 78, 81-82, serine 86, 88-91, 106-114, and serine 118; these read GD, NIST, and KHGNKSITS. Residue glycine 78 coordinates anthranilate. Serine 90 is a binding site for Mg(2+). Asparagine 109 contacts anthranilate. Position 163 (arginine 163) interacts with anthranilate. Residues aspartate 222 and glutamate 223 each coordinate Mg(2+).

Belongs to the anthranilate phosphoribosyltransferase family. As to quaternary structure, homodimer. It depends on Mg(2+) as a cofactor.

It carries out the reaction N-(5-phospho-beta-D-ribosyl)anthranilate + diphosphate = 5-phospho-alpha-D-ribose 1-diphosphate + anthranilate. Its pathway is amino-acid biosynthesis; L-tryptophan biosynthesis; L-tryptophan from chorismate: step 2/5. In terms of biological role, catalyzes the transfer of the phosphoribosyl group of 5-phosphorylribose-1-pyrophosphate (PRPP) to anthranilate to yield N-(5'-phosphoribosyl)-anthranilate (PRA). This chain is Anthranilate phosphoribosyltransferase, found in Staphylococcus aureus (strain USA300).